Here is a 1185-residue protein sequence, read N- to C-terminus: AT-rich interactive domain-containing protein 5B (1185 aa).

5 disordered regions span residues 248–281 (PNLK…ESKA), 413–550 (KGEE…PDED), 713–742 (ISKK…PIAI), 883–932 (HQQE…EGKG), and 1033–1058 (HLPK…LHGL). Residues 252-261 (GRPRKKKPCP) show a composition bias toward basic residues. Positions 321 to 413 (RADEQAFLVA…LILPYERFIK (93 aa)) constitute an ARID domain. The segment covering 447–461 (IKNENQKSKKEKDNA) has biased composition (basic and acidic residues). Positions 462 to 471 (QKPQDASEVS) are enriched in polar residues. Positions 473-487 (EQEKDQESADQKNFT) are enriched in basic and acidic residues. Residues 1034 to 1053 (LPKETSVKEKVPDAEGEGSK) are compositionally biased toward basic and acidic residues.

Belongs to the ARID5B family.

It is found in the nucleus. Transcription coactivator that binds to the 5'-AATA[CT]-3' core sequence and plays a key role in adipogenesis and liver development. Required for adipogenesis: regulates triglyceride metabolism in adipocytes by regulating expression of adipogenic genes. This chain is AT-rich interactive domain-containing protein 5B (ARID5B), found in Gallus gallus (Chicken).